The primary structure comprises 206 residues: Ion-translocating oxidoreductase complex subunit G (206 aa).

The chain crosses the membrane as a helical span at residues 9-29; it reads GITLALFAAGSTGLTAAINQM. Thr-174 is modified (FMN phosphoryl threonine).

This sequence belongs to the RnfG family. The complex is composed of six subunits: RsxA, RsxB, RsxC, RsxD, RsxE and RsxG. The cofactor is FMN.

Its subcellular location is the cell inner membrane. Its function is as follows. Part of a membrane-bound complex that couples electron transfer with translocation of ions across the membrane. Required to maintain the reduced state of SoxR. Probably transfers electron from NAD(P)H to SoxR. The protein is Ion-translocating oxidoreductase complex subunit G of Escherichia coli (strain K12).